A 350-amino-acid polypeptide reads, in one-letter code: C5a anaphylatoxin chemotactic receptor 1 (350 aa).

Residues 1 to 37 lie on the Extracellular side of the membrane; the sequence is MDDMCSILTEEELSLYNITDCEFVKPGGLGPVLGPRH. A glycan (N-linked (GlcNAc...) asparagine) is linked at asparagine 17. The chain crosses the membrane as a helical span at residues 38–64; it reads LSALVFYGLVFLLGVPGNALVVWVTGF. At 65-69 the chain is on the cytoplasmic side; sequence RMPRS. The helical transmembrane segment at 70–93 threads the bilayer; that stretch reads VTSLWFLNLALADLLCCLSLPLLM. Residues 94–110 are Extracellular-facing; that stretch reads VPLAMDQHWPFGPVACK. Residues cysteine 109 and cysteine 187 are joined by a disulfide bond. Residues 111 to 132 form a helical membrane-spanning segment; sequence LLKGLLYLIMFCSVLLLVLISL. Residues 133–154 lie on the Cytoplasmic side of the membrane; sequence DRFLLVSWPVWCQNWRRPRKAG. The helical transmembrane segment at 155 to 174 threads the bilayer; it reads WVCVGVWLLALLGSIPQFVY. Residues 175–197 are Extracellular-facing; sequence VKEVQLSTSKSECLGLYTVASAW. Residues 198–223 form a helical membrane-spanning segment; that stretch reads ANTTARFLVGFVLPFITIVTCHWVVY. Residues 224–247 are Cytoplasmic-facing; it reads SRARRGSGVGPGRVSEARSRRTLR. A helical transmembrane segment spans residues 248 to 270; the sequence is VIVAVSLSFFLCWFPLHILDFLV. At 271–287 the chain is on the extracellular side; sequence LSTPRHSSHSANIQLAH. A helical membrane pass occupies residues 288-308; it reads TLALCLAYCNSCLNPLLYVCL. The Cytoplasmic portion of the chain corresponds to 309 to 350; sequence GRGFKQNINRSLRNMFNFATEESVTRQSMFKSTSERTQEMNM.

Belongs to the G-protein coupled receptor 1 family. In terms of tissue distribution, high expression in head, kidney and posterior kidney, lower levels in peripheral blood leukocytes and spleen, low expression in brain and gills, heart, intestine and very low expression in liver and muscle.

It is found in the cell membrane. Functionally, receptor for the chemotactic and inflammatory peptide anaphylatoxin C5a. This receptor stimulates chemotaxis, granule enzyme release and superoxide anion production. The chain is C5a anaphylatoxin chemotactic receptor 1 (c5ar1) from Oncorhynchus mykiss (Rainbow trout).